Consider the following 304-residue polypeptide: Glutaminase (304 aa).

Substrate-binding residues include serine 61, asparagine 113, glutamate 158, asparagine 165, tyrosine 189, tyrosine 240, and valine 258.

Belongs to the glutaminase family. Homotetramer.

The catalysed reaction is L-glutamine + H2O = L-glutamate + NH4(+). The protein is Glutaminase of Fusobacterium nucleatum subsp. nucleatum (strain ATCC 25586 / DSM 15643 / BCRC 10681 / CIP 101130 / JCM 8532 / KCTC 2640 / LMG 13131 / VPI 4355).